A 361-amino-acid polypeptide reads, in one-letter code: Peptide chain release factor 1 (361 aa).

The residue at position 235 (Gln-235) is an N5-methylglutamine.

The protein belongs to the prokaryotic/mitochondrial release factor family. Methylated by PrmC. Methylation increases the termination efficiency of RF1.

It localises to the cytoplasm. Its function is as follows. Peptide chain release factor 1 directs the termination of translation in response to the peptide chain termination codons UAG and UAA. The sequence is that of Peptide chain release factor 1 from Chlamydia abortus (strain DSM 27085 / S26/3) (Chlamydophila abortus).